A 129-amino-acid polypeptide reads, in one-letter code: Ribulose bisphosphate carboxylase small subunit (129 aa).

The disordered stretch occupies residues 109 to 129; the sequence is LRMTRTESNGRSQHYMWETQR.

Belongs to the RuBisCO small chain family. In terms of assembly, heterohexadecamer of 8 large and 8 small subunits.

In terms of biological role, ruBisCO catalyzes two reactions: the carboxylation of D-ribulose 1,5-bisphosphate, the primary event in carbon dioxide fixation, as well as the oxidative fragmentation of the pentose substrate. Both reactions occur simultaneously and in competition at the same active site. Although the small subunit is not catalytic it is essential for maximal activity. This Rhizobium meliloti (strain 1021) (Ensifer meliloti) protein is Ribulose bisphosphate carboxylase small subunit.